Consider the following 119-residue polypeptide: Large ribosomal subunit protein bL20 (119 aa).

It belongs to the bacterial ribosomal protein bL20 family.

Binds directly to 23S ribosomal RNA and is necessary for the in vitro assembly process of the 50S ribosomal subunit. It is not involved in the protein synthesizing functions of that subunit. In Clostridium beijerinckii (strain ATCC 51743 / NCIMB 8052) (Clostridium acetobutylicum), this protein is Large ribosomal subunit protein bL20.